We begin with the raw amino-acid sequence, 478 residues long: Ribulose bisphosphate carboxylase large chain (478 aa).

Residues 1 to 2 (MS) constitute a propeptide that is removed on maturation. Substrate contacts are provided by Asn123 and Thr173. Residue Lys175 is the Proton acceptor of the active site. Lys177 is a substrate binding site. Mg(2+) is bound by residues Lys201, Asp203, and Glu204. Lys201 carries the post-translational modification N6-carboxylysine. Ser208 is subject to Phosphoserine. His294 serves as the catalytic Proton acceptor. Residues Arg295 and His327 each contribute to the substrate site. Position 330 is a phosphothreonine (Thr330). Residue Ser379 coordinates substrate.

Belongs to the RuBisCO large chain family. Type I subfamily. As to quaternary structure, heterohexadecamer of 8 large chains and 8 small chains; disulfide-linked. The disulfide link is formed within the large subunit homodimers. It depends on Mg(2+) as a cofactor. In terms of processing, the disulfide bond which can form in the large chain dimeric partners within the hexadecamer appears to be associated with oxidative stress and protein turnover.

The protein resides in the plastid. The protein localises to the chloroplast. The enzyme catalyses 2 (2R)-3-phosphoglycerate + 2 H(+) = D-ribulose 1,5-bisphosphate + CO2 + H2O. It catalyses the reaction D-ribulose 1,5-bisphosphate + O2 = 2-phosphoglycolate + (2R)-3-phosphoglycerate + 2 H(+). In terms of biological role, ruBisCO catalyzes two reactions: the carboxylation of D-ribulose 1,5-bisphosphate, the primary event in carbon dioxide fixation, as well as the oxidative fragmentation of the pentose substrate in the photorespiration process. Both reactions occur simultaneously and in competition at the same active site. The sequence is that of Ribulose bisphosphate carboxylase large chain from Lepidium virginicum (Virginia pepperweed).